Reading from the N-terminus, the 427-residue chain is UPF0229 protein YeaH (427 aa).

Residues 84 to 110 (QSDRIERPQGGGGGSGSGQGQASQDGE) are disordered. The span at 92–102 (QGGGGGSGSGQ) shows a compositional bias: gly residues.

This sequence belongs to the UPF0229 family.

The protein is UPF0229 protein YeaH of Escherichia fergusonii (strain ATCC 35469 / DSM 13698 / CCUG 18766 / IAM 14443 / JCM 21226 / LMG 7866 / NBRC 102419 / NCTC 12128 / CDC 0568-73).